Consider the following 496-residue polypeptide: MNKEILAVVEAVSNEKSLPREKIFEALEMALATATKKKHEQEIDIRVSINRKTGGFTTFRRWMVVETVTQPTREITLEAACFDGEKVYLNDYIEEQIESVDFDRITTQTAKQVIVQKVREAERAMLVEQFRKYTGQIITGIVKKINRDNIMLDLGNNAEALILREGMLPRENFRPGDRIRGILYGVYPEARGAQLFISRSKTEMLTELFRIEVPEIGEEVIEIKAAARDPGSRAKIAVKTNDKRIDPVGACVGMRGARVQAVSSELCGERIDIILWDDNPAQFVINAMAPADVASIVVDEDCHTMDIAVDINNLAQAIGRNGQNVRLASQISGWELNVMTTEDLHSKHKEEAHTAFNFFKKNLNINENIIKILVKEGFSSLEELAYIPFNELLEVKNLTEDQAKKVREGAKSKLLLMESDKNKMIIQERKTEKELLKINGMNAVLALQLAEKNIFTIEELADQGIDDLTDIKNLNSEQAGLLIMTARNICWFSSKV.

The region spanning 135–200 (GQIITGIVKK…RGAQLFISRS (66 aa)) is the S1 motif domain. Positions 302–370 (CHTMDIAVDI…KNLNINENII (69 aa)) constitute a KH domain. 2 tandem repeats follow at residues 364 to 414 (NINE…KSKL) and 440 to 490 (GMNA…RNIC). Residues 364–490 (NINENIIKIL…LLIMTARNIC (127 aa)) form a 2 X 51 AA approximate repeats region.

The protein belongs to the NusA family. Monomer. Binds directly to the core enzyme of the DNA-dependent RNA polymerase and to nascent RNA.

Its subcellular location is the cytoplasm. Participates in both transcription termination and antitermination. In Buchnera aphidicola subsp. Acyrthosiphon pisum (strain APS) (Acyrthosiphon pisum symbiotic bacterium), this protein is Transcription termination/antitermination protein NusA.